The sequence spans 149 residues: 3-dehydroquinate dehydratase (149 aa).

Catalysis depends on Y26, which acts as the Proton acceptor. Substrate contacts are provided by N77, H83, and D90. Residue H103 is the Proton donor of the active site. Substrate-binding positions include 104 to 105 and R114; that span reads LS.

Belongs to the type-II 3-dehydroquinase family. Homododecamer.

The enzyme catalyses 3-dehydroquinate = 3-dehydroshikimate + H2O. It participates in metabolic intermediate biosynthesis; chorismate biosynthesis; chorismate from D-erythrose 4-phosphate and phosphoenolpyruvate: step 3/7. Catalyzes a trans-dehydration via an enolate intermediate. This is 3-dehydroquinate dehydratase (aroQ) from Haemophilus influenzae (strain ATCC 51907 / DSM 11121 / KW20 / Rd).